Here is a 186-residue protein sequence, read N- to C-terminus: NADH dehydrogenase [ubiquinone] 1 beta subcomplex subunit 8, mitochondrial (186 aa).

The N-terminal 28 residues, 1-28 (MAAARAGVLGVRWLQKAARNVVPLGART), are a transit peptide targeting the mitochondrion. The chain crosses the membrane as a helical span at residues 133-153 (LFGFVAFMLFMFWVGETYPAY).

This sequence belongs to the complex I NDUFB8 subunit family. Complex I is composed of 45 different subunits.

It is found in the mitochondrion inner membrane. Its function is as follows. Accessory subunit of the mitochondrial membrane respiratory chain NADH dehydrogenase (Complex I), that is believed not to be involved in catalysis. Complex I functions in the transfer of electrons from NADH to the respiratory chain. The immediate electron acceptor for the enzyme is believed to be ubiquinone. This is NADH dehydrogenase [ubiquinone] 1 beta subcomplex subunit 8, mitochondrial (NDUFB8) from Bos taurus (Bovine).